The primary structure comprises 277 residues: Glycerol-3-phosphate acyltransferase (277 aa).

5 helical membrane passes run F3–V23, I55–L75, P79–F99, I111–L131, and L155–L175. Residues K231–E277 are disordered. Composition is skewed to basic residues over residues K240–T253 and K262–K271.

It belongs to the PlsY family. In terms of assembly, probably interacts with PlsX.

It is found in the cell inner membrane. The enzyme catalyses an acyl phosphate + sn-glycerol 3-phosphate = a 1-acyl-sn-glycero-3-phosphate + phosphate. Its pathway is lipid metabolism; phospholipid metabolism. Catalyzes the transfer of an acyl group from acyl-phosphate (acyl-PO(4)) to glycerol-3-phosphate (G3P) to form lysophosphatidic acid (LPA). This enzyme utilizes acyl-phosphate as fatty acyl donor, but not acyl-CoA or acyl-ACP. This chain is Glycerol-3-phosphate acyltransferase, found in Legionella pneumophila (strain Lens).